A 156-amino-acid polypeptide reads, in one-letter code: Myosin, essential light chain, adductor muscle (156 aa).

EF-hand domains are found at residues Asp6 to Asn43 and Gly81 to Arg116.

Functionally, in molluscan muscle, calcium regulation is associated with myosin rather than with actin. Muscle myosin contains two types of light chains: the catalytic light chain, essential for ATPase activity, and the regulatory light chain, a calcium-binding protein responsible for Ca(2+) dependent binding and Ca(2+) dependent Mg-ATPase activity. The protein is Myosin, essential light chain, adductor muscle of Mizuhopecten yessoensis (Japanese scallop).